The chain runs to 361 residues: Peptide chain release factor 1 (361 aa).

The residue at position 237 (Q237) is an N5-methylglutamine. Positions 283-307 (AQQQEQQEQQSSTRKELIGSGDRSQ) are disordered.

Belongs to the prokaryotic/mitochondrial release factor family. In terms of processing, methylated by PrmC. Methylation increases the termination efficiency of RF1.

It is found in the cytoplasm. Its function is as follows. Peptide chain release factor 1 directs the termination of translation in response to the peptide chain termination codons UAG and UAA. In Vesicomyosocius okutanii subsp. Calyptogena okutanii (strain HA), this protein is Peptide chain release factor 1.